The sequence spans 219 residues: UPF0502 protein Swoo_2055 (219 aa).

The disordered stretch occupies residues 167-195; the sequence is QVKGESVPISEHSRSQREAPSKRQDEMDE. Positions 177–191 are enriched in basic and acidic residues; it reads EHSRSQREAPSKRQD.

Belongs to the UPF0502 family.

The polypeptide is UPF0502 protein Swoo_2055 (Shewanella woodyi (strain ATCC 51908 / MS32)).